The primary structure comprises 154 residues: Myoglobin (154 aa).

A Globin domain is found at 2–148 (GLSDGEWQLV…FRHDMAAKYK (147 aa)). Residue S4 is modified to Phosphoserine. H65 is a binding site for nitrite. An O2-binding site is contributed by H65. T68 is modified (phosphothreonine). A heme b-binding site is contributed by H94.

Belongs to the globin family. Monomeric.

The protein localises to the cytoplasm. Its subcellular location is the sarcoplasm. The enzyme catalyses Fe(III)-heme b-[protein] + nitric oxide + H2O = Fe(II)-heme b-[protein] + nitrite + 2 H(+). It carries out the reaction H2O2 + AH2 = A + 2 H2O. Functionally, monomeric heme protein which primary function is to store oxygen and facilitate its diffusion within muscle tissues. Reversibly binds oxygen through a pentacoordinated heme iron and enables its timely and efficient release as needed during periods of heightened demand. Depending on the oxidative conditions of tissues and cells, and in addition to its ability to bind oxygen, it also has a nitrite reductase activity whereby it regulates the production of bioactive nitric oxide. Under stress conditions, like hypoxia and anoxia, it also protects cells against reactive oxygen species thanks to its pseudoperoxidase activity. This chain is Myoglobin (MB), found in Osphranter rufus (Red kangaroo).